A 34-amino-acid chain; its full sequence is Photosystem I reaction center subunit XII (34 aa).

Residues 10-32 traverse the membrane as a helical segment; that stretch reads VFVALVVAAHAAVLALRLSISLY.

The protein belongs to the PsaM family.

Its subcellular location is the cellular thylakoid membrane. The protein is Photosystem I reaction center subunit XII of Parasynechococcus marenigrum (strain WH8102).